A 299-amino-acid chain; its full sequence is MTDNSRLRIAMQKSGRLSDDSRELLARCGIKINLHTQRLIAMAENMPIDILRVRDDDIPGLVMDGVVDLGIIGENVLEEELLNRRAQGEDPRYFTLRRLDFGGCRLSLATPVDEAWDGPLSLNGKRIATSYPHLLKRYLDQKGISFKSCLLNGSVEVAPRAGLADAICDLVSTGATLEANGLREVEVIYRSKACLIQRDGEMEESKQQLIDKLLTRIQGVIQARESKYIMMHAPTERLDEVIALLPGAERPTILPLAGDQQRVAMHMVSSETLFWETMEKLKALGASSILVLPIEKMME.

This sequence belongs to the ATP phosphoribosyltransferase family. Long subfamily. Equilibrium between an active dimeric form, an inactive hexameric form and higher aggregates. Interconversion between the various forms is largely reversible and is influenced by the natural substrates and inhibitors of the enzyme. It depends on Mg(2+) as a cofactor.

It localises to the cytoplasm. It catalyses the reaction 1-(5-phospho-beta-D-ribosyl)-ATP + diphosphate = 5-phospho-alpha-D-ribose 1-diphosphate + ATP. Its pathway is amino-acid biosynthesis; L-histidine biosynthesis; L-histidine from 5-phospho-alpha-D-ribose 1-diphosphate: step 1/9. Its activity is regulated as follows. Feedback inhibited by histidine. Functionally, catalyzes the condensation of ATP and 5-phosphoribose 1-diphosphate to form N'-(5'-phosphoribosyl)-ATP (PR-ATP). Has a crucial role in the pathway because the rate of histidine biosynthesis seems to be controlled primarily by regulation of HisG enzymatic activity. The chain is ATP phosphoribosyltransferase from Escherichia coli O7:K1 (strain IAI39 / ExPEC).